We begin with the raw amino-acid sequence, 265 residues long: Hydroxyethylthiazole kinase (265 aa).

Position 50 (Met-50) interacts with substrate. 2 residues coordinate ATP: Arg-125 and Thr-171. A substrate-binding site is contributed by Gly-198.

The protein belongs to the Thz kinase family. The cofactor is Mg(2+).

The enzyme catalyses 5-(2-hydroxyethyl)-4-methylthiazole + ATP = 4-methyl-5-(2-phosphooxyethyl)-thiazole + ADP + H(+). Its pathway is cofactor biosynthesis; thiamine diphosphate biosynthesis; 4-methyl-5-(2-phosphoethyl)-thiazole from 5-(2-hydroxyethyl)-4-methylthiazole: step 1/1. Functionally, catalyzes the phosphorylation of the hydroxyl group of 4-methyl-5-beta-hydroxyethylthiazole (THZ). The protein is Hydroxyethylthiazole kinase of Salmonella schwarzengrund (strain CVM19633).